The sequence spans 468 residues: MREIINVSVSHRSNHLITQFYNCLEPLLHDADQENDVFLNPNIDKVSKTVSYTPRALLWDAKLGNGSLGTYQYVSENDYADTLDSEQGATAKTAHRVQTHDRIRKSPYQLALDQGATVLPKINDEIAKYWSDYSKLIYDPSSFNTLQDWYHDAANQQKAPNFQNLRQVYFDNYETGSNQFRENYSNEFFDSNLHQQLEKCDSLQGFNIITELDNGWGGFSSSMLLELKDELPKVSYHTYGWNQDDVCSLKEPVHSTKTKFQMLCNKIRATIALSQESDLFFPLYANTKEAFWRSTGETVLLFDSVNSVFHGSRKQAATNSNMRKMSHLTNALTLGESKRNIVSKLNVDEYNSFSFYDRMPLYKNSKKPSHTFTQCEIDRVNHKESSMFHFTTYPWTNSDTIPDTHHSCAESVIGVTEKPRDVLKTWEDLVSRYFRYDSDREEIKDHLGTLSLEYEHGWYDDDDSDLDL.

The protein belongs to the misato family.

The protein resides in the mitochondrion. Functionally, involved in the partitioning of the mitochondrial organelle and mitochondrial DNA (mtDNA) inheritance. This chain is Protein DML1 (DML1), found in Kluyveromyces lactis (strain ATCC 8585 / CBS 2359 / DSM 70799 / NBRC 1267 / NRRL Y-1140 / WM37) (Yeast).